We begin with the raw amino-acid sequence, 1163 residues long: Protein phosphatase 1 regulatory subunit 26 (1163 aa).

Over residues His-65–Leu-83 the composition is skewed to basic and acidic residues. Disordered stretches follow at residues His-65–Lys-91, Arg-144–Arg-253, Arg-266–Leu-393, Ala-463–Ser-496, Val-514–Leu-653, Arg-672–Ala-929, and Thr-1073–Leu-1163. 2 stretches are compositionally biased toward polar residues: residues His-163 to Ser-179 and Asp-189 to Glu-201. Residues Ile-208–Asp-236 show a composition bias toward basic and acidic residues. Residues Lys-273–Leu-297 are compositionally biased toward polar residues. Residues Met-315–Arg-324 show a composition bias toward basic residues. The segment covering Gly-515–Ile-535 has biased composition (low complexity). Basic and acidic residues-rich tracts occupy residues Lys-566 to Gln-581 and Ala-634 to Ser-645. Basic residues predominate over residues Arg-672–Arg-682. Positions Thr-766 to Ser-780 are enriched in low complexity. Over residues Ser-783 to Glu-792 the composition is skewed to acidic residues. Composition is skewed to basic and acidic residues over residues Leu-793–Arg-808 and Glu-850–Arg-859. Over residues Thr-860–Lys-871 the composition is skewed to polar residues. The segment covering Ser-901 to Arg-910 has biased composition (low complexity). Residues Gln-1105–Gln-1131 show a composition bias toward basic and acidic residues. Phosphoserine is present on Ser-1111. Polar residues-rich tracts occupy residues Gln-1133 to Thr-1146 and Ala-1154 to Leu-1163.

In terms of assembly, interacts with UTP20 and PPP1CA.

It is found in the nucleus. It localises to the nucleolus. Inhibits phosphatase activity of protein phosphatase 1 (PP1) complexes. May positively regulate cell proliferation. The polypeptide is Protein phosphatase 1 regulatory subunit 26 (Ppp1r26) (Mus musculus (Mouse)).